The sequence spans 92 residues: C-C motif chemokine 3 (92 aa).

The N-terminal stretch at 1–23 (MQVSTAALAVLLCTMALCNQFSA) is a signal peptide. Cystine bridges form between Cys33/Cys57 and Cys34/Cys73.

It belongs to the intercrine beta (chemokine CC) family. Self-associates. Also heterodimer of MIP-1-alpha(4-69) and MIP-1-beta(3-69). Interacts with CCR1. In terms of processing, N-terminal processed form LD78-alpha(4-69) is produced by proteolytic cleavage after secretion from HTLV1-transformed T-cells.

The protein resides in the secreted. In terms of biological role, monokine with inflammatory and chemokinetic properties. Binds to CCR1, CCR4 and CCR5. One of the major HIV-suppressive factors produced by CD8+ T-cells. Recombinant MIP-1-alpha induces a dose-dependent inhibition of different strains of HIV-1, HIV-2, and simian immunodeficiency virus (SIV). In Homo sapiens (Human), this protein is C-C motif chemokine 3 (CCL3).